A 238-amino-acid chain; its full sequence is Orotidine 5'-phosphate decarboxylase (238 aa).

Substrate is bound by residues Asp-10, Lys-32, 59–68 (DLKLHDIPNT), Thr-122, Arg-184, Gln-193, Gly-213, and Arg-214. The active-site Proton donor is Lys-61.

This sequence belongs to the OMP decarboxylase family. Type 1 subfamily. As to quaternary structure, homodimer.

The enzyme catalyses orotidine 5'-phosphate + H(+) = UMP + CO2. The protein operates within pyrimidine metabolism; UMP biosynthesis via de novo pathway; UMP from orotate: step 2/2. Functionally, catalyzes the decarboxylation of orotidine 5'-monophosphate (OMP) to uridine 5'-monophosphate (UMP). This Bacillus cereus (strain Q1) protein is Orotidine 5'-phosphate decarboxylase.